A 245-amino-acid chain; its full sequence is Sec-independent protein translocase protein TatC (245 aa).

6 helical membrane passes run 17–37, 73–93, 107–127, 159–179, 191–207, and 210–230; these read FISV…RSYI, FFAA…KFVA, FVSF…FVVV, VVVA…FAKI, FRIA…FMTP, and VLSQ…SILI.

It belongs to the TatC family. In terms of assembly, the Tat system comprises two distinct complexes: a TatABC complex, containing multiple copies of TatA, TatB and TatC subunits, and a separate TatA complex, containing only TatA subunits. Substrates initially bind to the TatABC complex, which probably triggers association of the separate TatA complex to form the active translocon.

It is found in the cell inner membrane. Functionally, part of the twin-arginine translocation (Tat) system that transports large folded proteins containing a characteristic twin-arginine motif in their signal peptide across membranes. Together with TatB, TatC is part of a receptor directly interacting with Tat signal peptides. In Campylobacter jejuni subsp. jejuni serotype O:2 (strain ATCC 700819 / NCTC 11168), this protein is Sec-independent protein translocase protein TatC.